A 262-amino-acid chain; its full sequence is Succinate dehydrogenase [ubiquinone] iron-sulfur subunit (262 aa).

One can recognise a 2Fe-2S ferredoxin-type domain in the interval 21–110 (KLIKIFRWDS…NNIIYVYPLP (90 aa)). The [2Fe-2S] cluster site is built by cysteine 73, cysteine 78, cysteine 81, and cysteine 93. The 31-residue stretch at 154–184 (DRLYLDGLYECILCACCSASCPSYWWNHDKY) folds into the 4Fe-4S ferredoxin-type domain. Residues cysteine 164, cysteine 167, and cysteine 170 each contribute to the [4Fe-4S] cluster site. [3Fe-4S] cluster is bound at residue cysteine 174. Tryptophan 179 contacts a ubiquinone. [3Fe-4S] cluster is bound by residues cysteine 221 and cysteine 227. Cysteine 231 is a [4Fe-4S] cluster binding site.

This sequence belongs to the succinate dehydrogenase/fumarate reductase iron-sulfur protein family. As to quaternary structure, component of complex II composed of four subunits: a flavoprotein (FP), an iron-sulfur protein (IP), and a cytochrome b composed of a large and a small subunit. [2Fe-2S] cluster is required as a cofactor. [3Fe-4S] cluster serves as cofactor. The cofactor is [4Fe-4S] cluster.

It localises to the mitochondrion inner membrane. It catalyses the reaction a quinone + succinate = fumarate + a quinol. It participates in carbohydrate metabolism; tricarboxylic acid cycle; fumarate from succinate (eukaryal route): step 1/1. Its function is as follows. Iron-sulfur protein (IP) subunit of succinate dehydrogenase (SDH) that is involved in complex II of the mitochondrial electron transport chain and is responsible for transferring electrons from succinate to ubiquinone (coenzyme Q). The polypeptide is Succinate dehydrogenase [ubiquinone] iron-sulfur subunit (SDH2) (Cyanidium caldarium (Red alga)).